A 548-amino-acid chain; its full sequence is Tylosin resistance ATP-binding protein TlrC (548 aa).

ABC transporter domains lie at 9–265 and 347–547; these read LSLH…RRRQ and IATA…VSGA. Residues 41-48 and 387-394 each bind ATP; these read GDNGAGKS and GPNGAGKS.

It belongs to the ABC transporter superfamily.

The protein resides in the cell membrane. In terms of biological role, responsible for tylosin resistance, and is proposed to be a subunit of a multicomponent export system for the energy-dependent efflux of tylosin. The protein is Tylosin resistance ATP-binding protein TlrC (tlrC) of Streptomyces fradiae (Streptomyces roseoflavus).